The chain runs to 677 residues: MSDNDSRRRLADLNAQLKLHDVLYHEHDAPEISDAQYDALVQEKRELLEKFPELSAYNDYEGVIGALTVDARLPKIAHREPMLSLENSFTIQDVEKFISRVKRSLNMDPEVSITIACEPKIDGLSFAALYEKGSLIRVATRGNGHLGEDITNTAKVIRKLPHKIANAPEVLEVRGEIYMHHSDFEKLKDVCNFANPRNAAAGSIRQLNPKIAEERNLRYVAYCIVNSALASQEAILKQLAEWGFCTHTEVLFADNMDDALSFHTRMYNTRSTLGYDIDGIVYKVNDTHLQKLLGSTSKYPRWATAHKFPSTEAITKLRDISVQVGRTGVITPIAELEPINIGGTLVSRASLHNLNEIARKDIRIGDSVIVKRAGEVIPQVVGVDHTARCNSAVPEEYVFPSHCPSCGSTLSRAPGEVAMRCTAELSCQAQVLERVKHFVSRDGLNIVGLGEKQIEFFCNASYISNVADIFSLREKISHMNLSAEHGWGEKSIALLINAINASTTVKLSNFIFALGIRFIGKGAAKLIAEHYRSYSAWVRAMTSLANGEDPDNIHGIGLKSIESLRAFFSSEDNLRVLQTLEEKLNILNEIANTETASPISGKTIVFTGVLEDMSRNEAAKYAETLGAKVGNTVTTKTDILVAGSNSGSKLDTARKLGIQVMNESEWKDLLKTVSNSE.

Residues 34 to 38, 84 to 85, and E118 contribute to the NAD(+) site; these read DAQYD and SL. Catalysis depends on K120, which acts as the N6-AMP-lysine intermediate. 4 residues coordinate NAD(+): R141, E176, K283, and K307. Zn(2+)-binding residues include C403, C406, C421, and C427. Residues 594–677 enclose the BRCT domain; it reads ETASPISGKT…DLLKTVSNSE (84 aa).

It belongs to the NAD-dependent DNA ligase family. LigA subfamily. Requires Mg(2+) as cofactor. It depends on Mn(2+) as a cofactor.

The enzyme catalyses NAD(+) + (deoxyribonucleotide)n-3'-hydroxyl + 5'-phospho-(deoxyribonucleotide)m = (deoxyribonucleotide)n+m + AMP + beta-nicotinamide D-nucleotide.. In terms of biological role, DNA ligase that catalyzes the formation of phosphodiester linkages between 5'-phosphoryl and 3'-hydroxyl groups in double-stranded DNA using NAD as a coenzyme and as the energy source for the reaction. It is essential for DNA replication and repair of damaged DNA. This Anaplasma phagocytophilum (strain HZ) protein is DNA ligase.